The sequence spans 987 residues: Transposase for transposon Tn4430 (987 aa).

It belongs to the transposase 7 family.

Required for transposition of transposon Tn4430. This chain is Transposase for transposon Tn4430 (tnpA), found in Bacillus thuringiensis.